The primary structure comprises 366 residues: D-alanine--D-alanine ligase (366 aa).

The region spanning 148 to 357 (KMTFEQAGLA…FPELVDRLIQ (210 aa)) is the ATP-grasp domain. Residue 184-239 (EAALGYPAFVKPANLGSSVGIAKVRSRQELEAALDNAASYDRRLVVEAGVVAREVE) participates in ATP binding. 3 residues coordinate Mg(2+): Asp310, Glu324, and Asn326.

The protein belongs to the D-alanine--D-alanine ligase family. The cofactor is Mg(2+). Mn(2+) is required as a cofactor.

It localises to the cytoplasm. The enzyme catalyses 2 D-alanine + ATP = D-alanyl-D-alanine + ADP + phosphate + H(+). It participates in cell wall biogenesis; peptidoglycan biosynthesis. Functionally, cell wall formation. The chain is D-alanine--D-alanine ligase from Nostoc punctiforme (strain ATCC 29133 / PCC 73102).